The chain runs to 102 residues: NADH-quinone oxidoreductase subunit K (102 aa).

The next 3 helical transmembrane spans lie at 6 to 26 (MEHG…GLLI), 30 to 50 (LLFI…AFVV), and 65 to 85 (ILVI…LLLL).

It belongs to the complex I subunit 4L family. As to quaternary structure, NDH-1 is composed of 14 different subunits. Subunits NuoA, H, J, K, L, M, N constitute the membrane sector of the complex.

It localises to the cell inner membrane. It carries out the reaction a quinone + NADH + 5 H(+)(in) = a quinol + NAD(+) + 4 H(+)(out). In terms of biological role, NDH-1 shuttles electrons from NADH, via FMN and iron-sulfur (Fe-S) centers, to quinones in the respiratory chain. The immediate electron acceptor for the enzyme in this species is believed to be ubiquinone. Couples the redox reaction to proton translocation (for every two electrons transferred, four hydrogen ions are translocated across the cytoplasmic membrane), and thus conserves the redox energy in a proton gradient. This is NADH-quinone oxidoreductase subunit K from Aeromonas hydrophila subsp. hydrophila (strain ATCC 7966 / DSM 30187 / BCRC 13018 / CCUG 14551 / JCM 1027 / KCTC 2358 / NCIMB 9240 / NCTC 8049).